We begin with the raw amino-acid sequence, 310 residues long: tRNA dimethylallyltransferase (310 aa).

Gly10–Ser17 provides a ligand contact to ATP. Thr12 to Ser17 lines the substrate pocket. Residues Asp35 to Gln38 form an interaction with substrate tRNA region.

The protein belongs to the IPP transferase family. Monomer. Mg(2+) is required as a cofactor.

The enzyme catalyses adenosine(37) in tRNA + dimethylallyl diphosphate = N(6)-dimethylallyladenosine(37) in tRNA + diphosphate. Its function is as follows. Catalyzes the transfer of a dimethylallyl group onto the adenine at position 37 in tRNAs that read codons beginning with uridine, leading to the formation of N6-(dimethylallyl)adenosine (i(6)A). This chain is tRNA dimethylallyltransferase, found in Clostridium perfringens (strain SM101 / Type A).